Reading from the N-terminus, the 513-residue chain is Palmitoyltransferase ZDHHC14 (513 aa).

At 1–59 (MHLGVEEPIRECQYNQICTHNSSPMDTPHIKKKKNKRKWQVFPGRNRFYCNGRIMMAKQ) the chain is on the cytoplasmic side. Residues 60-80 (TGVFYLTMVLILVTSGLFFAF) traverse the membrane as a helical segment. The Lumenal segment spans residues 81 to 88 (DCPFLASN). A helical membrane pass occupies residues 89–109 (LTPAIPAIGGVLFVFVMGMLL). The Cytoplasmic segment spans residues 110 to 207 (RASFSDPGVL…GNCVGRRNYR (98 aa)). Residues 164-214 (KYCFTCKIFRPPRASHCSLCDNCVDRFDHHCPWVGNCVGRRNYRFFYLFIL) form the DHHC domain. The S-palmitoyl cysteine intermediate role is filled by Cys-194. Residues 208-228 (FFYLFILSLSFLTIFIFAFVI) traverse the membrane as a helical segment. At 229–266 (THVILNALRKALALSTAADFEAVQKDPTGLAFLVLSKT) the chain is on the lumenal side. A helical membrane pass occupies residues 267-287 (ALLDILEVVVCFFSVWSIVGL). The Cytoplasmic portion of the chain corresponds to 288–513 (SGFHTYLISS…VRGLVKLSSV (226 aa)). The tract at residues 348 to 369 (FIQPDTPQPATQTNGTSACPPN) is disordered. The span at 355-369 (QPATQTNGTSACPPN) shows a compositional bias: polar residues.

This sequence belongs to the DHHC palmitoyltransferase family. ERF2/ZDHHC9 subfamily.

Its subcellular location is the endoplasmic reticulum membrane. It is found in the golgi apparatus membrane. It catalyses the reaction L-cysteinyl-[protein] + hexadecanoyl-CoA = S-hexadecanoyl-L-cysteinyl-[protein] + CoA. Functionally, palmitoyltransferase that could catalyze the addition of palmitate onto various protein substrates. In Danio rerio (Zebrafish), this protein is Palmitoyltransferase ZDHHC14 (zdhhc14).